The chain runs to 126 residues: SPbeta prophage-derived uncharacterized protein YorC (126 aa).

This Bacillus subtilis (strain 168) protein is SPbeta prophage-derived uncharacterized protein YorC (yorC).